The primary structure comprises 749 residues: Amyloid-beta A4 precursor protein-binding family A member 2 (749 aa).

Disordered regions lie at residues M1–E94, D130–E220, and S238–E344. Residue S11 is modified to Phosphoserine. Over residues G70 to T80 the composition is skewed to polar residues. Acidic residues-rich tracts occupy residues S81–E94 and T131–T142. An STXBP1-binding region spans residues H185–A270. At S208 the chain carries Phosphoserine. Polar residues predominate over residues S238–E247. Positions R305–H315 are enriched in basic and acidic residues. Residues D368 to D555 enclose the PID domain. 2 PDZ domains span residues E568–C654 and T659–A734.

As to quaternary structure, part of a multimeric complex containing STXBP1 and syntaxin-1. Binds to the cytoplasmic domain of amyloid-beta protein, and to the nuclear factor NF-kappa-B/p65 via its PDZ domain. Interacts with the N-terminal domain of NECAB3. Brain.

Putative function in synaptic vesicle exocytosis by binding to STXBP1, an essential component of the synaptic vesicle exocytotic machinery. May modulate processing of the amyloid-beta precursor protein (APP) and hence formation of APP-beta. The sequence is that of Amyloid-beta A4 precursor protein-binding family A member 2 (APBA2) from Homo sapiens (Human).